A 179-amino-acid chain; its full sequence is Large ribosomal subunit protein uL5 (179 aa).

Belongs to the universal ribosomal protein uL5 family. Part of the 50S ribosomal subunit; part of the 5S rRNA/L5/L18/L25 subcomplex. Contacts the 5S rRNA and the P site tRNA. Forms a bridge to the 30S subunit in the 70S ribosome.

In terms of biological role, this is one of the proteins that bind and probably mediate the attachment of the 5S RNA into the large ribosomal subunit, where it forms part of the central protuberance. In the 70S ribosome it contacts protein S13 of the 30S subunit (bridge B1b), connecting the 2 subunits; this bridge is implicated in subunit movement. Contacts the P site tRNA; the 5S rRNA and some of its associated proteins might help stabilize positioning of ribosome-bound tRNAs. In Bacillus cereus (strain Q1), this protein is Large ribosomal subunit protein uL5.